The following is a 295-amino-acid chain: UDP-N-acetylenolpyruvoylglucosamine reductase (295 aa).

In terms of domain architecture, FAD-binding PCMH-type spans 23-188 (KVGGPADFLA…ISAKFALKPG (166 aa)). R167 is a catalytic residue. S217 (proton donor) is an active-site residue. The active site involves E287.

Belongs to the MurB family. It depends on FAD as a cofactor.

The protein localises to the cytoplasm. It catalyses the reaction UDP-N-acetyl-alpha-D-muramate + NADP(+) = UDP-N-acetyl-3-O-(1-carboxyvinyl)-alpha-D-glucosamine + NADPH + H(+). Its pathway is cell wall biogenesis; peptidoglycan biosynthesis. Its function is as follows. Cell wall formation. The protein is UDP-N-acetylenolpyruvoylglucosamine reductase of Streptococcus pyogenes serotype M49 (strain NZ131).